A 343-amino-acid chain; its full sequence is Serine/threonine-protein kinase SRK2C (343 aa).

Positions 4 to 260 (YEIVKDIGSG…IEEIKNHSWF (257 aa)) constitute a Protein kinase domain. ATP-binding positions include 10-18 (IGSGNFGVA) and K33. Residue D123 is the Proton acceptor of the active site. A Phosphothreonine modification is found at T158.

Belongs to the protein kinase superfamily. Ser/Thr protein kinase family. As to quaternary structure, interacts with I-2 and TOPP1. Expressed in seedlings.

It catalyses the reaction L-seryl-[protein] + ATP = O-phospho-L-seryl-[protein] + ADP + H(+). It carries out the reaction L-threonyl-[protein] + ATP = O-phospho-L-threonyl-[protein] + ADP + H(+). Involved in gene regulation and confers tolerance to drought and osmotic stress. This Arabidopsis thaliana (Mouse-ear cress) protein is Serine/threonine-protein kinase SRK2C (SRK2C).